The primary structure comprises 412 residues: MQTWSSPSVPKLRGAPRPLRLHDTATGEVRPTAPGDTARLYVCGITPYDATHLGHAATYLAFDLVQRVWLDNGHDVHYVQNVTDVDDPLLERAARDQDDWVVLAMRETALFREDMEALRVLAPREYVGAVESIPGIVDMIEKLLASGAAYRLDDDEYPDVYFPHDATPNFGYESNYDRETMLRLFAERGGDPDRPGKRDPLDALLWRMARPGEPSWETSIGTGRPGWHIECSHIALANLDTPFDLQGGGSDLVFPHHEYSAAHAEALTGQHPFARHYAHAGMIGLDGEKMSKSRGNLVFVSKLRSTGVDPGVIRLALFAGHYREDRPWTDELFAEAGTRLALWRSAADLESGPSVDDVVARVREHLGNDLDTPKALAALDAWAREAWDRGGPDTEAPGVFRTAVDALLGIAL.

A disordered region spans residues 1 to 30 (MQTWSSPSVPKLRGAPRPLRLHDTATGEVR). Residue cysteine 43 coordinates Zn(2+). Residues 43–46 (CGIT), threonine 58, and 81–83 (NVT) contribute to the L-cysteinyl-5'-AMP site. A 'HIGH' region motif is present at residues 45–55 (ITPYDATHLGH). The 'ERGGDP' region motif lies at 187-192 (ERGGDP). Tryptophan 227 provides a ligand contact to L-cysteinyl-5'-AMP. Zn(2+) is bound at residue cysteine 231. 249-251 (GSD) serves as a coordination point for L-cysteinyl-5'-AMP. Histidine 256 contacts Zn(2+). An L-cysteinyl-5'-AMP-binding site is contributed by isoleucine 283. Positions 289 to 293 (KMSKS) match the 'KMSKS' region motif.

Belongs to the class-I aminoacyl-tRNA synthetase family. MshC subfamily. In terms of assembly, monomer. Zn(2+) serves as cofactor.

The enzyme catalyses 1D-myo-inositol 2-amino-2-deoxy-alpha-D-glucopyranoside + L-cysteine + ATP = 1D-myo-inositol 2-(L-cysteinylamino)-2-deoxy-alpha-D-glucopyranoside + AMP + diphosphate + H(+). Its function is as follows. Catalyzes the ATP-dependent condensation of GlcN-Ins and L-cysteine to form L-Cys-GlcN-Ins. The chain is L-cysteine:1D-myo-inositol 2-amino-2-deoxy-alpha-D-glucopyranoside ligase from Actinosynnema mirum (strain ATCC 29888 / DSM 43827 / JCM 3225 / NBRC 14064 / NCIMB 13271 / NRRL B-12336 / IMRU 3971 / 101).